The following is a 562-amino-acid chain: Glutamate--tRNA ligase (562 aa).

Positions 90 to 100 match the 'HIGH' region motif; it reads PNPSGLLHIGH.

It belongs to the class-I aminoacyl-tRNA synthetase family. Glutamate--tRNA ligase type 2 subfamily.

The protein localises to the cytoplasm. It catalyses the reaction tRNA(Glu) + L-glutamate + ATP = L-glutamyl-tRNA(Glu) + AMP + diphosphate. In terms of biological role, catalyzes the attachment of glutamate to tRNA(Glu) in a two-step reaction: glutamate is first activated by ATP to form Glu-AMP and then transferred to the acceptor end of tRNA(Glu). This is Glutamate--tRNA ligase from Nanoarchaeum equitans (strain Kin4-M).